A 221-amino-acid polypeptide reads, in one-letter code: Deoxyribose-phosphate aldolase (221 aa).

Residue aspartate 91 is the Proton donor/acceptor of the active site. The Schiff-base intermediate with acetaldehyde role is filled by lysine 153. Lysine 182 serves as the catalytic Proton donor/acceptor.

Belongs to the DeoC/FbaB aldolase family. DeoC type 1 subfamily.

It is found in the cytoplasm. The catalysed reaction is 2-deoxy-D-ribose 5-phosphate = D-glyceraldehyde 3-phosphate + acetaldehyde. The protein operates within carbohydrate degradation; 2-deoxy-D-ribose 1-phosphate degradation; D-glyceraldehyde 3-phosphate and acetaldehyde from 2-deoxy-alpha-D-ribose 1-phosphate: step 2/2. In terms of biological role, catalyzes a reversible aldol reaction between acetaldehyde and D-glyceraldehyde 3-phosphate to generate 2-deoxy-D-ribose 5-phosphate. The polypeptide is Deoxyribose-phosphate aldolase (Clostridium botulinum (strain Alaska E43 / Type E3)).